We begin with the raw amino-acid sequence, 305 residues long: Ribonuclease HIII (305 aa).

The 215-residue stretch at 91 to 305 folds into the RNase H type-2 domain; it reads WSVIGSDEVG…ANTQKAQKLL (215 aa). The a divalent metal cation site is built by aspartate 97, glutamate 98, and aspartate 201.

The protein belongs to the RNase HII family. RnhC subfamily. Mn(2+) is required as a cofactor. Mg(2+) serves as cofactor.

The protein localises to the cytoplasm. The catalysed reaction is Endonucleolytic cleavage to 5'-phosphomonoester.. In terms of biological role, endonuclease that specifically degrades the RNA of RNA-DNA hybrids. This Enterococcus faecalis (strain ATCC 700802 / V583) protein is Ribonuclease HIII.